The chain runs to 133 residues: Holo-[acyl-carrier-protein] synthase (133 aa).

D8 and E57 together coordinate Mg(2+).

It belongs to the P-Pant transferase superfamily. AcpS family. Mg(2+) is required as a cofactor.

The protein localises to the cytoplasm. The enzyme catalyses apo-[ACP] + CoA = holo-[ACP] + adenosine 3',5'-bisphosphate + H(+). Functionally, transfers the 4'-phosphopantetheine moiety from coenzyme A to a Ser of acyl-carrier-protein. This is Holo-[acyl-carrier-protein] synthase from Bartonella tribocorum (strain CIP 105476 / IBS 506).